The chain runs to 267 residues: LysM and putative peptidoglycan-binding domain-containing protein 4 (267 aa).

At 1–211 the chain is on the extracellular side; the sequence is MRRGDPPPRA…RSNGADWGIQ (211 aa). The interval 30–64 is disordered; that stretch reads HRQEEPEASSEDEELNVMELRPRSRDSSSKEKEGV. The span at 35–45 shows a compositional bias: acidic residues; the sequence is PEASSEDEELN. Residues 49–64 show a composition bias toward basic and acidic residues; the sequence is LRPRSRDSSSKEKEGV. The LysM domain maps to 70–114; that stretch reads LERDISHEDNLSKLALQYGCKVADIKRVNNLFQEQDMYALKSIKI. An N-linked (GlcNAc...) asparagine glycan is attached at N79. The tract at residues 130 to 152 is disordered; that stretch reads RTPQQRPSHDAAPSNSAMASVSG. Over residues 142–152 the composition is skewed to polar residues; that stretch reads PSNSAMASVSG. Residues 212-232 form a helical membrane-spanning segment; the sequence is WWNAVIAMLLIGIVLPIFYVV. The Cytoplasmic segment spans residues 233-267; sequence YYKTKDSGESAVDNVGVNISVSTSNSTREYNGKSP.

It is found in the membrane. This is LysM and putative peptidoglycan-binding domain-containing protein 4 (lysmd4) from Danio rerio (Zebrafish).